The following is a 738-amino-acid chain: DNA ligase (738 aa).

Residues 48 to 52 (DVVYD), 97 to 98 (SL), and E136 contribute to the NAD(+) site. The active-site N6-AMP-lysine intermediate is the K138. NAD(+)-binding residues include R159, E196, K356, and K380. Zn(2+) contacts are provided by C474, C477, C492, and C497. The BRCT domain maps to 659-738 (QLPQPLAGKT…SQLLELLEET (80 aa)).

Belongs to the NAD-dependent DNA ligase family. LigA subfamily. Requires Mg(2+) as cofactor. Mn(2+) serves as cofactor.

It catalyses the reaction NAD(+) + (deoxyribonucleotide)n-3'-hydroxyl + 5'-phospho-(deoxyribonucleotide)m = (deoxyribonucleotide)n+m + AMP + beta-nicotinamide D-nucleotide.. In terms of biological role, DNA ligase that catalyzes the formation of phosphodiester linkages between 5'-phosphoryl and 3'-hydroxyl groups in double-stranded DNA using NAD as a coenzyme and as the energy source for the reaction. It is essential for DNA replication and repair of damaged DNA. The polypeptide is DNA ligase (Cyanothece sp. (strain PCC 7425 / ATCC 29141)).